The chain runs to 121 residues: UPF0102 protein Strop_1320 (121 aa).

It belongs to the UPF0102 family.

The protein is UPF0102 protein Strop_1320 of Salinispora tropica (strain ATCC BAA-916 / DSM 44818 / JCM 13857 / NBRC 105044 / CNB-440).